Consider the following 83-residue polypeptide: MKTLLLTLVVVTIVCLDLGYTRRCFNQQSSEPQTNKSCPPGENSCYNKQWRDHRGTITERGCGCPQVKSGIKLTCCQSDDCNN.

A signal peptide spans 1-21; sequence MKTLLLTLVVVTIVCLDLGYT. Disulfide bonds link C24–C45, C38–C62, C64–C75, and C76–C81.

It belongs to the three-finger toxin family. Short-chain subfamily. Type I alpha-neurotoxin sub-subfamily. In terms of tissue distribution, expressed by the venom gland.

It localises to the secreted. Functionally, binds to muscle nicotinic acetylcholine receptor (nAChR) and inhibit acetylcholine from binding to the receptor, thereby impairing neuromuscular transmission. The protein is Short neurotoxin VAN-10 of Laticauda laticaudata (Blue-ringed sea krait).